Consider the following 469-residue polypeptide: 3-isopropylmalate dehydratase large subunit (469 aa).

Cys-350, Cys-410, and Cys-413 together coordinate [4Fe-4S] cluster.

Belongs to the aconitase/IPM isomerase family. LeuC type 1 subfamily. Heterodimer of LeuC and LeuD. It depends on [4Fe-4S] cluster as a cofactor.

The enzyme catalyses (2R,3S)-3-isopropylmalate = (2S)-2-isopropylmalate. Its pathway is amino-acid biosynthesis; L-leucine biosynthesis; L-leucine from 3-methyl-2-oxobutanoate: step 2/4. In terms of biological role, catalyzes the isomerization between 2-isopropylmalate and 3-isopropylmalate, via the formation of 2-isopropylmaleate. This Sinorhizobium medicae (strain WSM419) (Ensifer medicae) protein is 3-isopropylmalate dehydratase large subunit.